We begin with the raw amino-acid sequence, 152 residues long: Urease accessory protein UreE (152 aa).

The protein belongs to the UreE family.

The protein resides in the cytoplasm. In terms of biological role, involved in urease metallocenter assembly. Binds nickel. Probably functions as a nickel donor during metallocenter assembly. In Enterobacter sp. (strain 638), this protein is Urease accessory protein UreE.